Consider the following 158-residue polypeptide: SsrA-binding protein (158 aa).

The protein belongs to the SmpB family.

The protein resides in the cytoplasm. Its function is as follows. Required for rescue of stalled ribosomes mediated by trans-translation. Binds to transfer-messenger RNA (tmRNA), required for stable association of tmRNA with ribosomes. tmRNA and SmpB together mimic tRNA shape, replacing the anticodon stem-loop with SmpB. tmRNA is encoded by the ssrA gene; the 2 termini fold to resemble tRNA(Ala) and it encodes a 'tag peptide', a short internal open reading frame. During trans-translation Ala-aminoacylated tmRNA acts like a tRNA, entering the A-site of stalled ribosomes, displacing the stalled mRNA. The ribosome then switches to translate the ORF on the tmRNA; the nascent peptide is terminated with the 'tag peptide' encoded by the tmRNA and targeted for degradation. The ribosome is freed to recommence translation, which seems to be the essential function of trans-translation. This chain is SsrA-binding protein, found in Roseiflexus castenholzii (strain DSM 13941 / HLO8).